The following is a 223-amino-acid chain: MTTQDELKRIAAEKAVEFVPENEYIGIGTGSTINFFIEALGKSGKKIKGAVSTSKKSSELLAQYDIPVVSLNEVSGLAVYIDGADEVNHALQMIKGGGGAHLNEKIVASASEKFVCIADESKYVSRLGKFPLPVEVVESARSLVSRKLLAMGGQPELRIGYTTFYGNQIVDVHGLNIDKPLMMEDEINKITGVLENGIFARDAADVLILGTEEGAKVIYPCQG.

Residues 29–32 (TGST), 82–85 (DGAD), and 95–98 (KGGG) each bind substrate. Glu104 functions as the Proton acceptor in the catalytic mechanism. Lys122 serves as a coordination point for substrate.

It belongs to the ribose 5-phosphate isomerase family. In terms of assembly, homodimer.

It carries out the reaction aldehydo-D-ribose 5-phosphate = D-ribulose 5-phosphate. The protein operates within carbohydrate degradation; pentose phosphate pathway; D-ribose 5-phosphate from D-ribulose 5-phosphate (non-oxidative stage): step 1/1. Functionally, catalyzes the reversible conversion of ribose-5-phosphate to ribulose 5-phosphate. The sequence is that of Ribose-5-phosphate isomerase A from Neisseria meningitidis serogroup C / serotype 2a (strain ATCC 700532 / DSM 15464 / FAM18).